Reading from the N-terminus, the 81-residue chain is Cytochrome b559 subunit alpha (81 aa).

The helical transmembrane segment at 21–35 (VIHALTIPALFLAGW) threads the bilayer. Residue His-23 participates in heme binding.

Belongs to the PsbE/PsbF family. Heterodimer of an alpha subunit and a beta subunit. PSII is composed of 1 copy each of membrane proteins PsbA, PsbB, PsbC, PsbD, PsbE, PsbF, PsbH, PsbI, PsbJ, PsbK, PsbL, PsbM, PsbT, PsbX, PsbY, PsbZ, Psb30/Ycf12, peripheral proteins PsbO, CyanoQ (PsbQ), PsbU, PsbV and a large number of cofactors. It forms dimeric complexes. It depends on heme b as a cofactor.

The protein resides in the cellular thylakoid membrane. In terms of biological role, this b-type cytochrome is tightly associated with the reaction center of photosystem II (PSII). PSII is a light-driven water:plastoquinone oxidoreductase that uses light energy to abstract electrons from H(2)O, generating O(2) and a proton gradient subsequently used for ATP formation. It consists of a core antenna complex that captures photons, and an electron transfer chain that converts photonic excitation into a charge separation. The polypeptide is Cytochrome b559 subunit alpha (Synechococcus sp. (strain JA-2-3B'a(2-13)) (Cyanobacteria bacterium Yellowstone B-Prime)).